Reading from the N-terminus, the 282-residue chain is Bifunctional protein FolD (282 aa).

Residues 164-166 and serine 189 contribute to the NADP(+) site; that span reads GRS.

Belongs to the tetrahydrofolate dehydrogenase/cyclohydrolase family. As to quaternary structure, homodimer.

It catalyses the reaction (6R)-5,10-methylene-5,6,7,8-tetrahydrofolate + NADP(+) = (6R)-5,10-methenyltetrahydrofolate + NADPH. The enzyme catalyses (6R)-5,10-methenyltetrahydrofolate + H2O = (6R)-10-formyltetrahydrofolate + H(+). It functions in the pathway one-carbon metabolism; tetrahydrofolate interconversion. In terms of biological role, catalyzes the oxidation of 5,10-methylenetetrahydrofolate to 5,10-methenyltetrahydrofolate and then the hydrolysis of 5,10-methenyltetrahydrofolate to 10-formyltetrahydrofolate. The chain is Bifunctional protein FolD from Lachnoclostridium phytofermentans (strain ATCC 700394 / DSM 18823 / ISDg) (Clostridium phytofermentans).